The chain runs to 314 residues: Homoserine O-acetyltransferase (314 aa).

C142 serves as the catalytic Acyl-thioester intermediate. K163 and S192 together coordinate substrate. Catalysis depends on H235, which acts as the Proton acceptor. E237 is an active-site residue. R249 contributes to the substrate binding site.

The protein belongs to the MetA family.

It is found in the cytoplasm. The catalysed reaction is L-homoserine + acetyl-CoA = O-acetyl-L-homoserine + CoA. Its pathway is amino-acid biosynthesis; L-methionine biosynthesis via de novo pathway; O-acetyl-L-homoserine from L-homoserine: step 1/1. In terms of biological role, transfers an acetyl group from acetyl-CoA to L-homoserine, forming acetyl-L-homoserine. This chain is Homoserine O-acetyltransferase, found in Azobacteroides pseudotrichonymphae genomovar. CFP2.